We begin with the raw amino-acid sequence, 444 residues long: Glycine receptor subunit alphaZ1 (444 aa).

Residues 1 to 24 (MFALGIYLWETIVFFSLAASQQAA) form the signal peptide. The Extracellular portion of the chain corresponds to 25–246 (ARKAASPMPP…RFHLERQMGY (222 aa)). N62 is a glycosylation site (N-linked (GlcNAc...) asparagine). Positions 89 and 153 each coordinate glycine. A disulfide bond links C162 and C176. E216 and D218 together coordinate Zn(2+). Cysteines 222 and 233 form a disulfide. Position 226–231 (226–231 (YNTGKF)) interacts with strychnine. T228 is a glycine binding site. A Zn(2+)-binding site is contributed by H239. The chain crosses the membrane as a helical span at residues 247 to 268 (YLIQMYIPSLLIVILSWVSFWI). At 269–273 (NMDAA) the chain is on the cytoplasmic side. The chain crosses the membrane as a helical span at residues 274–294 (PARVGLGITTVLTMTTQSSGS). At 295 to 305 (RASLPKVSYVK) the chain is on the extracellular side. Residues 306-326 (AIDIWMAVCLLFVFSALLEYA) form a helical membrane-spanning segment. At 327–412 (AVNFIARQHK…FISRAKRIDT (86 aa)) the chain is on the cytoplasmic side. The chain crosses the membrane as a helical span at residues 413-433 (VSRVAFPLVFLIFNIFYWITY). Over 434–444 (KIIRSEDIHKQ) the chain is Extracellular.

It belongs to the ligand-gated ion channel (TC 1.A.9) family. Glycine receptor (TC 1.A.9.3) subfamily. GLRA1 sub-subfamily. Homopentamer (in vitro). Heteropentamer composed of glra1 and glrb. Both homopentamers and heteropentamers form functional ion channels. Interacts with glrb. Expressed in brain.

It localises to the postsynaptic cell membrane. Its subcellular location is the synapse. It is found in the perikaryon. The protein resides in the cell projection. The protein localises to the dendrite. It localises to the cell membrane. It carries out the reaction chloride(in) = chloride(out). Its activity is regulated as follows. Activated by glycine and taurine. Inhibited by strychnine. Allosterically activated by ivermectin. Inhibited by picrotoxinin. Strychnine binding locks the channel in a closed conformation and prevents channel opening in response to extracellular glycine. Can also be activated by GABA and inhibited by bicuculline, but this requires heterologous expression in human cells. Functionally, subunit of heteromeric glycine-gated chloride channels. Plays an important role in the down-regulation of neuronal excitability. Contributes to the generation of inhibitory postsynaptic currents. Channel activity is potentiated by ethanol. The chain is Glycine receptor subunit alphaZ1 (glra1) from Danio rerio (Zebrafish).